Reading from the N-terminus, the 310-residue chain is Isoflavone reductase homolog A622 (310 aa).

NADP(+) contacts are provided by residues 13 to 19 (GGTGYIG), Arg38, and Lys47. The Proton acceptor role is filled by Lys135. Arg139 contacts NADP(+).

Belongs to the NmrA-type oxidoreductase family. Isoflavone reductase subfamily. As to quaternary structure, monomer. As to expression, expressed in roots and stems.

The protein localises to the cytoplasm. Its pathway is alkaloid biosynthesis; nicotine biosynthesis. Functionally, NADPH-binding protein. Involved in the biosynthesis of pyridine alkaloid natural products, leading mainly to the production of anabasine, anatabine, nicotine and nornicotine, effective deterrents against herbivores with antiparasitic and pesticide properties (neurotoxins); nornicotine serves as the precursor in the synthesis of the carcinogen compound N'-nitrosonornicotine (NNN). Reductase involved in a late step of tobacco alkaloid biosynthesis. Triggers either the formation of a nicotinic acid-derived precursor or the final condensation reaction of tobacco alkaloids. This Nicotiana sylvestris (Wood tobacco) protein is Isoflavone reductase homolog A622.